A 201-amino-acid polypeptide reads, in one-letter code: LexA repressor (201 aa).

The segment at residues 28-48 (RAEIAARLGFRSPNAAEEHLK) is a DNA-binding region (H-T-H motif). Residues serine 118 and lysine 155 each act as for autocatalytic cleavage activity in the active site.

It belongs to the peptidase S24 family. Homodimer.

The enzyme catalyses Hydrolysis of Ala-|-Gly bond in repressor LexA.. In terms of biological role, represses a number of genes involved in the response to DNA damage (SOS response), including recA and lexA. In the presence of single-stranded DNA, RecA interacts with LexA causing an autocatalytic cleavage which disrupts the DNA-binding part of LexA, leading to derepression of the SOS regulon and eventually DNA repair. The chain is LexA repressor from Photorhabdus laumondii subsp. laumondii (strain DSM 15139 / CIP 105565 / TT01) (Photorhabdus luminescens subsp. laumondii).